Consider the following 49-residue polypeptide: Large ribosomal subunit protein bL33A (49 aa).

It belongs to the bacterial ribosomal protein bL33 family.

The protein is Large ribosomal subunit protein bL33A (rpmG1) of Enterococcus faecalis (strain ATCC 700802 / V583).